Here is a 152-residue protein sequence, read N- to C-terminus: MSQLCPCGSAVEYSLCCHPYVSGEKVAPDPEHLMRSRYCAFVMKDADYLIKTWHPSCGAAALRAELIAGFAHTEWLGLTVFEHCWQDVDNIGFVSFVARFTEGGKTGAIIERSRFLKENGQWYYIDGTRPQFGRNDPCPCGSGKKFKKCCGQ.

It belongs to the UPF0225 family.

The protein is UPF0225 protein YchJ of Escherichia coli O17:K52:H18 (strain UMN026 / ExPEC).